The sequence spans 309 residues: tRNA pseudouridine synthase B (309 aa).

Aspartate 39 functions as the Nucleophile in the catalytic mechanism.

Belongs to the pseudouridine synthase TruB family. Type 1 subfamily.

It carries out the reaction uridine(55) in tRNA = pseudouridine(55) in tRNA. Responsible for synthesis of pseudouridine from uracil-55 in the psi GC loop of transfer RNAs. In Bacillus pumilus (strain SAFR-032), this protein is tRNA pseudouridine synthase B.